A 943-amino-acid polypeptide reads, in one-letter code: Receptor-like kinase TMK3 (943 aa).

An N-terminal signal peptide occupies residues 1 to 24 (MSNSHLGTLCFIISLLGLANFSLS). Over 25 to 482 (QTGLDDSTMQ…ETSKKSSNVK (458 aa)) the chain is Extracellular. Residue Asn-41 is glycosylated (N-linked (GlcNAc...) asparagine). A disulfide bridge connects residues Cys-54 and Cys-61. LRR repeat units lie at residues 64-88 (SNRV…LQSL), 89-111 (SELV…LSGL), 112-134 (SRLQ…LFSG), 136-160 (SSLQ…VKEA), 162-183 (SLQN…FFGS), 186-210 (LPSL…FAGT), 212-232 (IQSL…LGNM), 233-254 (TSLV…DLSG), 255-279 (LVSL…LVSL), and 281-301 (SLTT…LFGK). 2 N-linked (GlcNAc...) asparagine glycosylation sites follow: Asn-165 and Asn-170. N-linked (GlcNAc...) asparagine glycosylation is found at Asn-223 and Asn-231. Asn-286 is a glycosylation site (N-linked (GlcNAc...) asparagine). Disulfide bonds link Cys-315/Cys-323 and Cys-353/Cys-361. LRR repeat units follow at residues 363–386 (GGNI…SLAK), 387–410 (LTSL…ELTT), and 411–438 (LSKL…VTLV). Asn-365 carries N-linked (GlcNAc...) asparagine glycosylation. The segment at 441 to 476 (GNANMGKNGPNKTSDAPGASPGSKPSGGSDGSETSK) is disordered. Asn-451 is a glycosylation site (N-linked (GlcNAc...) asparagine). Low complexity predominate over residues 454 to 467 (SDAPGASPGSKPSG). A helical membrane pass occupies residues 483 to 503 (IIVPVVGGVVGALCLVGLGVC). Residues 504–943 (LYAKKRKRPA…ADSFTSVDGR (440 aa)) lie on the Cytoplasmic side of the membrane. The interval 514–534 (RVQSPSSNMVIHPHHSGDNDD) is disordered. A Protein kinase domain is found at 585 to 866 (FSEENILGRG…AHIVNVLSSL (282 aa)). Residues 591-599 (LGRGGFGTV) and Lys-613 contribute to the ATP site. Catalysis depends on Asp-714, which acts as the Proton acceptor. The disordered stretch occupies residues 904–943 (QTADDSGSSSSAYGSKDNTQTSIPTRPSGFADSFTSVDGR). Positions 906-918 (ADDSGSSSSAYGS) are enriched in low complexity. The span at 919–928 (KDNTQTSIPT) shows a compositional bias: polar residues.

It belongs to the protein kinase superfamily. Ser/Thr protein kinase family. As to expression, expressed in roots, leaves, stems, siliques and flowers.

The protein localises to the membrane. It catalyses the reaction L-seryl-[protein] + ATP = O-phospho-L-seryl-[protein] + ADP + H(+). It carries out the reaction L-threonyl-[protein] + ATP = O-phospho-L-threonyl-[protein] + ADP + H(+). Involved in auxin signal transduction and cell expansion and proliferation regulation. The protein is Receptor-like kinase TMK3 of Arabidopsis thaliana (Mouse-ear cress).